Reading from the N-terminus, the 118-residue chain is Ribulose bisphosphate carboxylase small subunit (118 aa).

Belongs to the RuBisCO small chain family. Heterohexadecamer of 8 large and 8 small subunits.

In terms of biological role, ruBisCO catalyzes two reactions: the carboxylation of D-ribulose 1,5-bisphosphate, the primary event in carbon dioxide fixation, as well as the oxidative fragmentation of the pentose substrate. Both reactions occur simultaneously and in competition at the same active site. Although the small subunit is not catalytic it is essential for maximal activity. The polypeptide is Ribulose bisphosphate carboxylase small subunit (Thiobacillus denitrificans (strain ATCC 25259 / T1)).